A 185-amino-acid polypeptide reads, in one-letter code: MPAYDKADLERRMHGAVEALKSDLTGLRTGRASVNLLDPVTVEIYGAHMPLNQAATVTAPEPRMLSVQVWDRSNVGPVDKAIRSAGLGLNPIVDGQTLRIPIPDLTEERRKELAKLASQYAEKARVAVRNVRRDGMDSLKTDEKKGEIGEDDRKRRETEVQKLTDATISDVDAAAAAKEKEILGK.

Positions 136–161 (MDSLKTDEKKGEIGEDDRKRRETEVQ) are disordered.

It belongs to the RRF family.

The protein localises to the cytoplasm. Functionally, responsible for the release of ribosomes from messenger RNA at the termination of protein biosynthesis. May increase the efficiency of translation by recycling ribosomes from one round of translation to another. The chain is Ribosome-recycling factor from Rhizorhabdus wittichii (strain DSM 6014 / CCUG 31198 / JCM 15750 / NBRC 105917 / EY 4224 / RW1) (Sphingomonas wittichii).